The sequence spans 786 residues: Protein SEY1 (786 aa).

The Cytoplasmic portion of the chain corresponds to 1–684; it reads MSDLKEAIQL…KRSIVNTTER (684 aa). The 228-residue stretch at 35 to 262 folds into the GB1/RHD3-type G domain; sequence GVKYHVISVF…QDASFFKDEY (228 aa). 45–52 provides a ligand contact to GTP; sequence GSQSSGKS. Residues 355 to 375 adopt a coiled-coil conformation; it reads KKVYEERRDDLIKQLNTIIDE. A helical membrane pass occupies residues 685–705; the sequence is IPLYMYALVVALGWGRIITIL. Topologically, residues 706 to 708 are lumenal; it reads RNP. Residues 709–729 traverse the membrane as a helical segment; that stretch reads ATIILSIIVLAGAYFVHKLNL. The Cytoplasmic portion of the chain corresponds to 730 to 786; that stretch reads WGPLLQFANQATGQATAVLKQTVRSLVVDEEPKRKILVEPHESEGVDKEPSKNDQHL. The tract at residues 765-786 is disordered; it reads ILVEPHESEGVDKEPSKNDQHL.

The protein belongs to the TRAFAC class dynamin-like GTPase superfamily. GB1/RHD3 GTPase family. RHD3 subfamily.

It localises to the endoplasmic reticulum membrane. In terms of biological role, cooperates with the reticulon proteins and tubule-shaping DP1 family proteins to generate and maintain the structure of the tubular endoplasmic reticulum network. Has GTPase activity, which is required for its function in ER organization. The polypeptide is Protein SEY1 (Kluyveromyces lactis (strain ATCC 8585 / CBS 2359 / DSM 70799 / NBRC 1267 / NRRL Y-1140 / WM37) (Yeast)).